Consider the following 654-residue polypeptide: Probable Xaa-Pro aminopeptidase P (654 aa).

4 residues coordinate Mn(2+): Asp451, Asp462, Glu560, and Glu574.

It belongs to the peptidase M24B family. Requires Mn(2+) as cofactor.

The enzyme catalyses Release of any N-terminal amino acid, including proline, that is linked to proline, even from a dipeptide or tripeptide.. In terms of biological role, catalyzes the removal of a penultimate prolyl residue from the N-termini of peptides. This is Probable Xaa-Pro aminopeptidase P (ampp) from Botryotinia fuckeliana (strain B05.10) (Noble rot fungus).